A 185-amino-acid polypeptide reads, in one-letter code: Threonylcarbamoyl-AMP synthase (185 aa).

The YrdC-like domain occupies 4-185; that stretch reads SFRVQQAARE…LATGEVVRPG (182 aa).

The protein belongs to the SUA5 family. TsaC subfamily.

It localises to the cytoplasm. It carries out the reaction L-threonine + hydrogencarbonate + ATP = L-threonylcarbamoyladenylate + diphosphate + H2O. Its function is as follows. Required for the formation of a threonylcarbamoyl group on adenosine at position 37 (t(6)A37) in tRNAs that read codons beginning with adenine. Catalyzes the conversion of L-threonine, HCO(3)(-)/CO(2) and ATP to give threonylcarbamoyl-AMP (TC-AMP) as the acyladenylate intermediate, with the release of diphosphate. The polypeptide is Threonylcarbamoyl-AMP synthase (Pseudomonas putida (strain ATCC 47054 / DSM 6125 / CFBP 8728 / NCIMB 11950 / KT2440)).